The sequence spans 365 residues: Aminomethyltransferase (365 aa).

Belongs to the GcvT family. In terms of assembly, the glycine cleavage system is composed of four proteins: P, T, L and H.

It carries out the reaction N(6)-[(R)-S(8)-aminomethyldihydrolipoyl]-L-lysyl-[protein] + (6S)-5,6,7,8-tetrahydrofolate = N(6)-[(R)-dihydrolipoyl]-L-lysyl-[protein] + (6R)-5,10-methylene-5,6,7,8-tetrahydrofolate + NH4(+). Functionally, the glycine cleavage system catalyzes the degradation of glycine. This is Aminomethyltransferase from Cronobacter sakazakii (strain ATCC BAA-894) (Enterobacter sakazakii).